Reading from the N-terminus, the 274-residue chain is Exosome complex component RRP40 (274 aa).

The residue at position 2 (Ala2) is an N-acetylalanine. Lys150 is covalently cross-linked (Glycyl lysine isopeptide (Lys-Gly) (interchain with G-Cter in SUMO2)).

This sequence belongs to the RRP40 family. In terms of assembly, component of the RNA exosome core complex (Exo-9), composed of EXOSC1, EXOSC2, EXOSC3, EXOSC4, EXOSC5, EXOSC6, EXOSC7, EXOSC8 and EXOSC9; within the complex interacts with EXOSC5 and EXOSC9. The catalytically inactive RNA exosome core complex (Exo-9) associates with the catalytic subunit EXOSC10/RRP6. Exo-9 may associate with DIS3 to form the nucleolar exosome complex, or DIS3L to form the cytoplasmic exosome complex. Exo-9 is formed by a hexameric base ring consisting of the heterodimers EXOSC4-EXOSC9, EXOSC5-EXOSC8 and EXOSC6-EXOSC7, and a cap ring consisting of EXOSC1, EXOSC2 and EXOSC3. The RNA exosome complex associates with cofactors C1D/RRP47, MPHOSPH6/MPP6 and MTREX/MTR4. Interacts with MPHOSPH6/MPP6; the interaction is direct. Interacts with GTPBP1. Interacts with ZC3HAV1. Interacts with DDX17 only in the presence of ZC3HAV1 in an RNA-independent manner. Interacts with DHX36; this interaction occurs in a RNase-insensitive manner. Interacts with HBS1L isoform 2.

The protein resides in the cytoplasm. The protein localises to the nucleus. It localises to the nucleolus. Non-catalytic component of the RNA exosome complex which has 3'-&gt;5' exoribonuclease activity and participates in a multitude of cellular RNA processing and degradation events. In the nucleus, the RNA exosome complex is involved in proper maturation of stable RNA species such as rRNA, snRNA and snoRNA, in the elimination of RNA processing by-products and non-coding 'pervasive' transcripts, such as antisense RNA species and promoter-upstream transcripts (PROMPTs), and of mRNAs with processing defects, thereby limiting or excluding their export to the cytoplasm. The RNA exosome may be involved in Ig class switch recombination (CSR) and/or Ig variable region somatic hypermutation (SHM) by targeting AICDA deamination activity to transcribed dsDNA substrates. In the cytoplasm, the RNA exosome complex is involved in general mRNA turnover and specifically degrades inherently unstable mRNAs containing AU-rich elements (AREs) within their 3' untranslated regions, and in RNA surveillance pathways, preventing translation of aberrant mRNAs. It seems to be involved in degradation of histone mRNA. The catalytic inactive RNA exosome core complex of 9 subunits (Exo-9) is proposed to play a pivotal role in the binding and presentation of RNA for ribonucleolysis, and to serve as a scaffold for the association with catalytic subunits and accessory proteins or complexes. EXOSC3 as peripheral part of the Exo-9 complex stabilizes the hexameric ring of RNase PH-domain subunits through contacts with EXOSC9 and EXOSC5. The protein is Exosome complex component RRP40 (Exosc3) of Mus musculus (Mouse).